The primary structure comprises 235 residues: Large ribosomal subunit protein uL1c (235 aa).

It belongs to the universal ribosomal protein uL1 family. In terms of assembly, part of the 50S ribosomal subunit.

Its subcellular location is the plastid. It localises to the chloroplast. In terms of biological role, binds directly to 23S rRNA. Might be involved in E site tRNA release (Potential). This Gracilaria tenuistipitata var. liui (Red alga) protein is Large ribosomal subunit protein uL1c (rpl1).